A 271-amino-acid chain; its full sequence is MPELPEVETIRRGISPWVIDQKVVAVVVRQPRLRWPVPSNLSACLVGYAFSGVERRAKYLLLPNPAGCLLIHLGMSGSLRIVPSDTPPAAHDHVDIALESGRTLRLNDPRRFGAVLWIEGRPEDHALLAHLGPEPFAVEFTGAMLYARSRGRKLAVKNFIMDQRIVVGVGNIYASEALYRAGIHPMRAAGRVSRRRYAALAEAVRQVLTAAIEAGGTTLRDFTDENGRPGYFSQRLLVYGREGQPCVHCGRPIRCETIGQRSSYFCTRCQR.

The active-site Schiff-base intermediate with DNA is Pro2. Glu3 functions as the Proton donor in the catalytic mechanism. Lys58 acts as the Proton donor; for beta-elimination activity in catalysis. Residues His91, Arg110, and Arg152 each coordinate DNA. The FPG-type zinc-finger motif lies at Leu237 to Arg271. Residue Arg261 is the Proton donor; for delta-elimination activity of the active site.

Belongs to the FPG family. As to quaternary structure, monomer. Requires Zn(2+) as cofactor.

It carries out the reaction Hydrolysis of DNA containing ring-opened 7-methylguanine residues, releasing 2,6-diamino-4-hydroxy-5-(N-methyl)formamidopyrimidine.. The catalysed reaction is 2'-deoxyribonucleotide-(2'-deoxyribose 5'-phosphate)-2'-deoxyribonucleotide-DNA = a 3'-end 2'-deoxyribonucleotide-(2,3-dehydro-2,3-deoxyribose 5'-phosphate)-DNA + a 5'-end 5'-phospho-2'-deoxyribonucleoside-DNA + H(+). In terms of biological role, involved in base excision repair of DNA damaged by oxidation or by mutagenic agents. Acts as a DNA glycosylase that recognizes and removes damaged bases. Has a preference for oxidized purines, such as 7,8-dihydro-8-oxoguanine (8-oxoG). Has AP (apurinic/apyrimidinic) lyase activity and introduces nicks in the DNA strand. Cleaves the DNA backbone by beta-delta elimination to generate a single-strand break at the site of the removed base with both 3'- and 5'-phosphates. The polypeptide is Formamidopyrimidine-DNA glycosylase (Syntrophotalea carbinolica (strain DSM 2380 / NBRC 103641 / GraBd1) (Pelobacter carbinolicus)).